Reading from the N-terminus, the 360-residue chain is Phospho-N-acetylmuramoyl-pentapeptide-transferase (360 aa).

10 helical membrane passes run 2 to 22, 52 to 72, 80 to 100, 114 to 134, 156 to 176, 189 to 209, 235 to 255, 259 to 279, 284 to 304, and 338 to 358; these read IAIL…TPLF, MGGV…NISA, GLLL…DDFI, WKII…LQFP, LAFA…NFLI, LDGL…VVTM, LAIV…WNAS, IFMG…LSIL, FLAV…VIQI, and FWLI…AEWV.

This sequence belongs to the glycosyltransferase 4 family. MraY subfamily. Mg(2+) serves as cofactor.

Its subcellular location is the cell membrane. The enzyme catalyses UDP-N-acetyl-alpha-D-muramoyl-L-alanyl-gamma-D-glutamyl-meso-2,6-diaminopimeloyl-D-alanyl-D-alanine + di-trans,octa-cis-undecaprenyl phosphate = di-trans,octa-cis-undecaprenyl diphospho-N-acetyl-alpha-D-muramoyl-L-alanyl-D-glutamyl-meso-2,6-diaminopimeloyl-D-alanyl-D-alanine + UMP. It functions in the pathway cell wall biogenesis; peptidoglycan biosynthesis. Functionally, catalyzes the initial step of the lipid cycle reactions in the biosynthesis of the cell wall peptidoglycan: transfers peptidoglycan precursor phospho-MurNAc-pentapeptide from UDP-MurNAc-pentapeptide onto the lipid carrier undecaprenyl phosphate, yielding undecaprenyl-pyrophosphoryl-MurNAc-pentapeptide, known as lipid I. The polypeptide is Phospho-N-acetylmuramoyl-pentapeptide-transferase (Beutenbergia cavernae (strain ATCC BAA-8 / DSM 12333 / CCUG 43141 / JCM 11478 / NBRC 16432 / NCIMB 13614 / HKI 0122)).